The chain runs to 225 residues: ATP-dependent Clp protease proteolytic subunit (225 aa).

S126 serves as the catalytic Nucleophile. H151 is a catalytic residue.

It belongs to the peptidase S14 family. In terms of assembly, fourteen ClpP subunits assemble into 2 heptameric rings which stack back to back to give a disk-like structure with a central cavity, resembling the structure of eukaryotic proteasomes.

The protein resides in the cytoplasm. The enzyme catalyses Hydrolysis of proteins to small peptides in the presence of ATP and magnesium. alpha-casein is the usual test substrate. In the absence of ATP, only oligopeptides shorter than five residues are hydrolyzed (such as succinyl-Leu-Tyr-|-NHMec, and Leu-Tyr-Leu-|-Tyr-Trp, in which cleavage of the -Tyr-|-Leu- and -Tyr-|-Trp bonds also occurs).. In terms of biological role, cleaves peptides in various proteins in a process that requires ATP hydrolysis. Has a chymotrypsin-like activity. Plays a major role in the degradation of misfolded proteins. This Psychrobacter arcticus (strain DSM 17307 / VKM B-2377 / 273-4) protein is ATP-dependent Clp protease proteolytic subunit.